A 247-amino-acid polypeptide reads, in one-letter code: Aliphatic sulfonates import ATP-binding protein SsuB 3 (247 aa).

The ABC transporter domain maps to 13-227; it reads VRVRGAGRAF…SVVDPEFSAL (215 aa). An ATP-binding site is contributed by 45-52; sequence GASGSGKS.

It belongs to the ABC transporter superfamily. Aliphatic sulfonates importer (TC 3.A.1.17.2) family. As to quaternary structure, the complex is composed of two ATP-binding proteins (SsuB), two transmembrane proteins (SsuC) and a solute-binding protein (SsuA).

Its subcellular location is the cell membrane. The enzyme catalyses ATP + H2O + aliphatic sulfonate-[sulfonate-binding protein]Side 1 = ADP + phosphate + aliphatic sulfonateSide 2 + [sulfonate-binding protein]Side 1.. In terms of biological role, part of the ABC transporter complex SsuABC involved in aliphatic sulfonates import. Responsible for energy coupling to the transport system. This Nocardia farcinica (strain IFM 10152) protein is Aliphatic sulfonates import ATP-binding protein SsuB 3.